The sequence spans 475 residues: Ribulose bisphosphate carboxylase large chain (475 aa).

The propeptide occupies 1–2 (MS). P3 carries the post-translational modification N-acetylproline. At K14 the chain carries N6,N6,N6-trimethyllysine. N123 and T173 together coordinate substrate. The active-site Proton acceptor is the K175. K177 serves as a coordination point for substrate. K201, D203, and E204 together coordinate Mg(2+). K201 is modified (N6-carboxylysine). Residue H294 is the Proton acceptor of the active site. Substrate is bound by residues R295, H327, and S379.

This sequence belongs to the RuBisCO large chain family. Type I subfamily. Heterohexadecamer of 8 large chains and 8 small chains; disulfide-linked. The disulfide link is formed within the large subunit homodimers. It depends on Mg(2+) as a cofactor. The disulfide bond which can form in the large chain dimeric partners within the hexadecamer appears to be associated with oxidative stress and protein turnover.

It localises to the plastid. Its subcellular location is the chloroplast. The enzyme catalyses 2 (2R)-3-phosphoglycerate + 2 H(+) = D-ribulose 1,5-bisphosphate + CO2 + H2O. It catalyses the reaction D-ribulose 1,5-bisphosphate + O2 = 2-phosphoglycolate + (2R)-3-phosphoglycerate + 2 H(+). RuBisCO catalyzes two reactions: the carboxylation of D-ribulose 1,5-bisphosphate, the primary event in carbon dioxide fixation, as well as the oxidative fragmentation of the pentose substrate in the photorespiration process. Both reactions occur simultaneously and in competition at the same active site. In Fagopyrum esculentum subsp. ancestrale (Wild buckwheat), this protein is Ribulose bisphosphate carboxylase large chain.